We begin with the raw amino-acid sequence, 356 residues long: Glucose 1-dehydrogenase (356 aa).

The disordered stretch occupies residues 1–26 (MDAIVVSKADRTPRLVDRPRPDPTPG). The span at 8–21 (KADRTPRLVDRPRP) shows a compositional bias: basic and acidic residues. Asp38 is a binding site for Zn(2+). A substrate-binding site is contributed by Thr40. Residues His63 and Glu64 each coordinate Zn(2+). Residues 86 to 107 (TVRRPRGDPTPQFDRGQPDMAA) form a disordered region. Glu113 and Glu149 together coordinate substrate. A Zn(2+)-binding site is contributed by Glu149. NADP(+)-binding positions include 180 to 183 (NGSL), 205 to 206 (RR), 270 to 272 (LGV), and 300 to 302 (SVN). A substrate-binding site is contributed by Asn302.

It belongs to the zinc-containing alcohol dehydrogenase family. Glucose 1-dehydrogenase subfamily. Zn(2+) is required as a cofactor.

The enzyme catalyses D-glucose + NAD(+) = D-glucono-1,5-lactone + NADH + H(+). It catalyses the reaction D-glucose + NADP(+) = D-glucono-1,5-lactone + NADPH + H(+). Its function is as follows. Catalyzes the NAD(P)(+)-dependent oxidation of D-glucose to D-gluconate via gluconolactone. Can utilize both NAD(+) and NADP(+) as electron acceptor. Is involved in the degradation of glucose through a modified Entner-Doudoroff pathway. This Halobacterium salinarum (strain ATCC 700922 / JCM 11081 / NRC-1) (Halobacterium halobium) protein is Glucose 1-dehydrogenase.